The chain runs to 198 residues: C4b-binding protein beta chain (198 aa).

Residues 1-17 (MFFWLMCYLVDVWLISA) form the signal peptide. The 56-residue stretch at 22-77 (HCPDPLLVTDEFSSLEPVNVNDTFMFKCNEHCIFKGSNWSQCRENHTRVTHSPVSK) folds into the Sushi 1; atypical; lacks a Cys domain. 3 N-linked (GlcNAc...) asparagine glycosylation sites follow: Asn42, Asn59, and Asn66. The 57-residue stretch at 79–135 (RDCGPPETPTHGYFEGRDFKSGSTITYYCEARYRLVGTQHQQCIDGEWTSAPPICEL) folds into the Sushi 2 domain. 2 disulfide bridges follow: Cys81/Cys121 and Cys107/Cys133.

Disulfide-linked complex of alpha and beta chains.

It is found in the secreted. Functionally, controls the classical pathway of complement activation. It binds as a cofactor to C3b/C4b inactivator (C3bINA), which then hydrolyzes the complement fragment C4b. It also accelerates the degradation of the C4bC2a complex (C3 convertase) by dissociating the complement fragment C2a. It also interacts with serum amyloid P component. The protein is C4b-binding protein beta chain (C4BPB) of Bos taurus (Bovine).